Reading from the N-terminus, the 257-residue chain is MLILISPAKTLDYQSPLATTRYTQPELLDHSQQLIQQARQLSAPQISRLMGISDKLADLNATRFHDWQPHFTPDNARQAILAFKGDVYTGLQAETFNDADFDFAQQHLRMLSGLYGVLRPLDLMQPYRLEMGIRLENPRGKDLYQFWGDIITDKLNEALEAQGDRVVVNLASEEYFKSVKPKKLNAELIKPVFLDEKNGKFKVVSFYAKKARGLMSRFIIENRLTKPEQLTAFDREGYFFDEETSTKDELVFKRYEQ.

The protein belongs to the UPF0246 family.

This chain is UPF0246 protein YaaA, found in Salmonella schwarzengrund (strain CVM19633).